Consider the following 473-residue polypeptide: B box and SPRY domain-containing protein (473 aa).

The tract at residues 1–69 (MSADVSGTES…PKQGSERSQL (69 aa)) is disordered. Pro residues predominate over residues 35–51 (KPGPGPEPRPESGPEPG). The segment at 65 to 113 (ERSQLCPEHFEPLSWFCLSERRPVCATCAGFGGRCHRHRIRRAEEHAEE) adopts a B box-type zinc-finger fold. A B30.2/SPRY domain is found at 259 to 455 (SPLLTQLWAA…ISIVRGPLAT (197 aa)).

As to quaternary structure, interacts with YWHAZ/14-3-3 protein zeta. Interacts with TRPV5 and TRPV6. As to expression, according to PubMed:10978534, testis-specific. According to PubMed:16371431, broadly expressed.

The protein resides in the cytoplasm. The protein localises to the membrane. In terms of biological role, may regulate epithelial calcium transport by inhibiting TRPV5 activity. The protein is B box and SPRY domain-containing protein (Bspry) of Mus musculus (Mouse).